The primary structure comprises 140 residues: MDTKKFRGSRTCGGGTHKNRRGAGNRGGRGKAGACKHHFVRAMFRGYSYGKHGFNLPAEISRDVSIVNVGELDELAPYLVEEGLAEIKDDAYHINLENLGIEKVLGSGRVMKNLVVTSEGFSASAREKIEAAGGSCIDAE.

Residues 1–31 form a disordered region; it reads MDTKKFRGSRTCGGGTHKNRRGAGNRGGRGK.

The protein belongs to the universal ribosomal protein uL15 family. Part of the 50S ribosomal subunit.

Functionally, binds to the 23S rRNA. This Methanosarcina barkeri (strain Fusaro / DSM 804) protein is Large ribosomal subunit protein uL15.